Reading from the N-terminus, the 867-residue chain is Alanine--tRNA ligase (867 aa).

Zn(2+) is bound by residues His-556, His-560, Cys-658, and His-662.

This sequence belongs to the class-II aminoacyl-tRNA synthetase family. Requires Zn(2+) as cofactor.

The protein resides in the cytoplasm. The enzyme catalyses tRNA(Ala) + L-alanine + ATP = L-alanyl-tRNA(Ala) + AMP + diphosphate. Its function is as follows. Catalyzes the attachment of alanine to tRNA(Ala) in a two-step reaction: alanine is first activated by ATP to form Ala-AMP and then transferred to the acceptor end of tRNA(Ala). Also edits incorrectly charged Ser-tRNA(Ala) and Gly-tRNA(Ala) via its editing domain. The protein is Alanine--tRNA ligase of Fusobacterium nucleatum subsp. nucleatum (strain ATCC 25586 / DSM 15643 / BCRC 10681 / CIP 101130 / JCM 8532 / KCTC 2640 / LMG 13131 / VPI 4355).